The sequence spans 370 residues: DNA replication and repair protein RecF (370 aa).

Residue 30–37 coordinates ATP; sequence GDNGSGKT.

The protein belongs to the RecF family.

The protein resides in the cytoplasm. The RecF protein is involved in DNA metabolism; it is required for DNA replication and normal SOS inducibility. RecF binds preferentially to single-stranded, linear DNA. It also seems to bind ATP. This chain is DNA replication and repair protein RecF, found in Stutzerimonas stutzeri (strain A1501) (Pseudomonas stutzeri).